Reading from the N-terminus, the 226-residue chain is UPF0758 protein PsycPRwf_0491 (226 aa).

The MPN domain occupies 102 to 224 (SLNRSQVVKD…TLSFAETATA (123 aa)). Residues His-173, His-175, and Asp-186 each coordinate Zn(2+). Residues 173-186 (HNHPNQDATPSAAD) carry the JAMM motif motif.

This sequence belongs to the UPF0758 family.

This chain is UPF0758 protein PsycPRwf_0491, found in Psychrobacter sp. (strain PRwf-1).